A 307-amino-acid polypeptide reads, in one-letter code: Mycothiol acetyltransferase (307 aa).

N-acetyltransferase domains are found at residues 12 to 157 (TRTD…PPLP) and 160 to 307 (VTLR…YQLG). E43 is a 1D-myo-inositol 2-(L-cysteinylamino)-2-deoxy-alpha-D-glucopyranoside binding site. Residue 87-89 (LAV) participates in acetyl-CoA binding. Residues E187, K227, and E239 each coordinate 1D-myo-inositol 2-(L-cysteinylamino)-2-deoxy-alpha-D-glucopyranoside. Acetyl-CoA-binding positions include 243–245 (LGV) and 250–256 (HGGGLGK). Position 278 (Y278) interacts with 1D-myo-inositol 2-(L-cysteinylamino)-2-deoxy-alpha-D-glucopyranoside.

This sequence belongs to the acetyltransferase family. MshD subfamily. Monomer.

It carries out the reaction 1D-myo-inositol 2-(L-cysteinylamino)-2-deoxy-alpha-D-glucopyranoside + acetyl-CoA = mycothiol + CoA + H(+). Catalyzes the transfer of acetyl from acetyl-CoA to desacetylmycothiol (Cys-GlcN-Ins) to form mycothiol. The polypeptide is Mycothiol acetyltransferase (Salinispora tropica (strain ATCC BAA-916 / DSM 44818 / JCM 13857 / NBRC 105044 / CNB-440)).